The chain runs to 287 residues: Orotidine 5'-phosphate decarboxylase (287 aa).

Lysine 99 (proton donor) is an active-site residue.

It belongs to the OMP decarboxylase family. Type 2 subfamily.

It catalyses the reaction orotidine 5'-phosphate + H(+) = UMP + CO2. Its pathway is pyrimidine metabolism; UMP biosynthesis via de novo pathway; UMP from orotate: step 2/2. This chain is Orotidine 5'-phosphate decarboxylase, found in Clostridium novyi (strain NT).